A 265-amino-acid polypeptide reads, in one-letter code: Deoxyguanosine kinase, mitochondrial (265 aa).

ATP is bound at residue 32 to 40 (GNIAVGKST). Residues Glu57, Tyr88, Gln99, and Arg106 each coordinate substrate. Catalysis depends on Glu129, which acts as the Proton acceptor. Substrate is bound by residues Arg130 and Asp135. 190 to 194 (RLQRR) provides a ligand contact to ATP. Glu199 lines the substrate pocket. 242–244 (EDF) contacts ATP.

This sequence belongs to the DCK/DGK family. In terms of assembly, homodimer.

Its subcellular location is the mitochondrion. It carries out the reaction 2'-deoxyguanosine + ATP = dGMP + ADP + H(+). Phosphorylates deoxyguanosine in the mitochondrial matrix with high efficiency but shows very low activity against other deoxynucleosides. The polypeptide is Deoxyguanosine kinase, mitochondrial (Xenopus laevis (African clawed frog)).